We begin with the raw amino-acid sequence, 980 residues long: Conserved oligomeric Golgi complex subunit 1 (980 aa).

Alanine 2 is modified (N-acetylalanine). Serine 7 carries the phosphoserine modification. An N6-acetyllysine modification is found at lysine 598. The segment covering 923–934 (RATSRSVETQAQ) has biased composition (polar residues). Residues 923–950 (RATSRSVETQAQVGPPALSRVGDPTTHP) are disordered.

The protein belongs to the COG1 family. Component of the conserved oligomeric Golgi complex which is composed of eight different subunits and is required for normal Golgi morphology and localization.

The protein resides in the golgi apparatus membrane. Functionally, required for normal Golgi function. This Mus musculus (Mouse) protein is Conserved oligomeric Golgi complex subunit 1 (Cog1).